Consider the following 385-residue polypeptide: Acetate kinase (385 aa).

Position 8 (asparagine 8) interacts with Mg(2+). Lysine 15 is an ATP binding site. A substrate-binding site is contributed by arginine 85. Aspartate 142 serves as the catalytic Proton donor/acceptor. ATP is bound by residues 200 to 204, 275 to 277, and 323 to 327; these read HLGNG, DMR, and GIGEN. Glutamate 373 contacts Mg(2+).

The protein belongs to the acetokinase family. In terms of assembly, homodimer. Mg(2+) is required as a cofactor. Mn(2+) serves as cofactor.

It localises to the cytoplasm. It catalyses the reaction acetate + ATP = acetyl phosphate + ADP. Its pathway is metabolic intermediate biosynthesis; acetyl-CoA biosynthesis; acetyl-CoA from acetate: step 1/2. In terms of biological role, catalyzes the formation of acetyl phosphate from acetate and ATP. Can also catalyze the reverse reaction. The chain is Acetate kinase from Francisella tularensis subsp. holarctica (strain OSU18).